The chain runs to 185 residues: NEDD8-conjugating enzyme UBE2F (185 aa).

The interval 1–21 (MLTLASKLKRDDGVKGSRTTS) is disordered. The interaction with uba3 stretch occupies residues 1–29 (MLTLASKLKRDDGVKGSRTTSTTLDSMRR). Residues 32-185 (VRDRLLVKEV…VEDYIKRYAR (154 aa)) form the UBC core domain. The Glycyl thioester intermediate role is filled by Cys116.

The protein belongs to the ubiquitin-conjugating enzyme family. UBE2F subfamily.

The enzyme catalyses [E1 NEDD8-activating enzyme]-S-[NEDD8 protein]-yl-L-cysteine + [E2 NEDD8-conjugating enzyme]-L-cysteine = [E1 NEDD8-activating enzyme]-L-cysteine + [E2 NEDD8-conjugating enzyme]-S-[NEDD8-protein]-yl-L-cysteine.. It functions in the pathway protein modification; protein neddylation. Functionally, accepts the ubiquitin-like protein NEDD8 from the UBA3-NAE1 E1 complex and catalyzes its covalent attachment to other proteins. Together with the E3 ubiquitin ligase rnf7/rbx2, specifically neddylates cullin-5 (cul5). Does not neddylate cul1, cul2, cul3, cul4a or cul4b. The chain is NEDD8-conjugating enzyme UBE2F (ube2f) from Xenopus laevis (African clawed frog).